The chain runs to 147 residues: Large ribosomal subunit protein uL15 (147 aa).

Over residues 1–14 the composition is skewed to basic and acidic residues; that stretch reads MKLHELRPAEGAVR. A disordered region spans residues 1 to 54; sequence MKLHELRPAEGAVRDRKRKGRGTASGLGKTAGRGSNGQKARSGGGVRPGFEGGQ. 2 stretches are compositionally biased toward gly residues: residues 23-35 and 42-52; these read TASGLGKTAGRGS and SGGGVRPGFEG.

It belongs to the universal ribosomal protein uL15 family. Part of the 50S ribosomal subunit.

In terms of biological role, binds to the 23S rRNA. The polypeptide is Large ribosomal subunit protein uL15 (Alkaliphilus oremlandii (strain OhILAs) (Clostridium oremlandii (strain OhILAs))).